The chain runs to 79 residues: Calcium/calmodulin-dependent protein kinase II inhibitor 2 (79 aa).

A disordered region spans residues 1 to 21 (MSEILPYSEDKMGRFGADPEG). Positions 43–69 (KRPPKLGQIGRAKRVVIEDDRIDDVLK) are inhibitory domain.

Belongs to the CAMK2N family. Interacts with CAMK2A and CAMK2B in the presence of Ca(2+)/calmodulin or after autophosphorylation.

It is found in the nucleus. Its subcellular location is the cytoplasm. The protein localises to the cytosol. It localises to the synapse. In terms of biological role, potent and specific cellular inhibitor of CaM-kinase II (CAMK2). Traps Ca(2+)/calmodulin on CAMK2. The chain is Calcium/calmodulin-dependent protein kinase II inhibitor 2 (CAMK2N2) from Bos taurus (Bovine).